Reading from the N-terminus, the 235-residue chain is Calcium-activated potassium channel subunit beta-2 (235 aa).

The tract at residues 1–45 (MFIWTSGRTSSSYRQDEKRNIYQKIRDHDLLDKRKTVTALKAGED) is ball and chain. Residues 1–46 (MFIWTSGRTSSSYRQDEKRNIYQKIRDHDLLDKRKTVTALKAGEDR) lie on the Cytoplasmic side of the membrane. Residues 47-67 (AILLGLAMMVCSIMMYFLLGI) form a helical membrane-spanning segment. The Extracellular segment spans residues 68–194 (TLLRSYMQSV…VILTKLYSSN (127 aa)). N-linked (GlcNAc...) asparagine glycans are attached at residues Asn88, Asn96, and Asn119. Residues 195 to 215 (VLFHSLFWPTCMMAGGVAIVA) traverse the membrane as a helical segment. The Cytoplasmic portion of the chain corresponds to 216 to 235 (MVKLTQYLSLLCERIQRINR).

The protein belongs to the KCNMB (TC 8.A.14.1) family. KCNMB2 subfamily. In terms of assembly, interacts with KCNMA1 tetramer. There are probably 4 molecules of KCMNB2 per KCNMA1 tetramer. N-glycosylated.

The protein localises to the membrane. Its function is as follows. Regulatory subunit of the calcium activated potassium KCNMA1 (maxiK) channel. Modulates the calcium sensitivity and gating kinetics of KCNMA1, thereby contributing to KCNMA1 channel diversity. Acts as a negative regulator that confers rapid and complete inactivation of KCNMA1 channel complex. This Mus musculus (Mouse) protein is Calcium-activated potassium channel subunit beta-2 (Kcnmb2).